A 332-amino-acid polypeptide reads, in one-letter code: Protein FAM9A (332 aa).

Residues Met1–Ala13 show a composition bias toward basic residues. Disordered stretches follow at residues Met1–Gly114 and Gln186–Val293. Basic and acidic residues-rich tracts occupy residues Gly74 to Thr91 and Asp98 to Gly114. Residues Ala196 to Ile217 are compositionally biased toward low complexity. Over residues Val218 to Glu275 the composition is skewed to acidic residues. Residues Gln276–Lys285 are compositionally biased toward basic and acidic residues.

Belongs to the XLR/SYCP3 family. Expressed exclusively in testis.

It is found in the nucleus. It localises to the nucleolus. The chain is Protein FAM9A from Homo sapiens (Human).